Consider the following 375-residue polypeptide: Putative ZDHHC-type palmitoyltransferase 8 (375 aa).

2 helical membrane-spanning segments follow: residues 4 to 24 (LFDF…TDFL) and 40 to 60 (VVGM…VSLW). N-linked (GlcNAc...) asparagine glycosylation occurs at Asn-95. The next 3 membrane-spanning stretches (helical) occupy residues 105-125 (ITFY…YYYY), 221-241 (FILF…LSFF), and 285-305 (YSFI…ILLF). The region spanning 176–226 (VSDGKWSTINKPKSHHCRICKRCIDSMDHHCPFAANCIGINNHHYFILFIG) is the DHHC domain. Asn-343 carries an N-linked (GlcNAc...) asparagine glycan.

Belongs to the DHHC palmitoyltransferase family.

Its subcellular location is the membrane. It catalyses the reaction L-cysteinyl-[protein] + hexadecanoyl-CoA = S-hexadecanoyl-L-cysteinyl-[protein] + CoA. This chain is Putative ZDHHC-type palmitoyltransferase 8, found in Dictyostelium discoideum (Social amoeba).